The primary structure comprises 366 residues: Phospho-N-acetylmuramoyl-pentapeptide-transferase (366 aa).

10 consecutive transmembrane segments (helical) span residues 27-47 (GAAITSLVLCWLLGRPMISLL), 76-96 (PTMGGLLILLAVSLSCLIWVI), 101-121 (FFWLSLLSMLFMGGIGFWDDF), 136-156 (IKLLAQAIVGVVVGIVLLADP), 176-196 (IDIGWMAIPFFILVVMGSSNA), 205-225 (GLAAGCTIGVAFVYAVFSYIS), 241-261 (GAGELTIFCSALIGACMGFLW), 264-284 (CYPAAVFMGDTGSLAIGSALG), 285-305 (VVAIILGQELLLVIAGGIFVI), and 343-363 (AVTVRFWILSLLFGLLALSSL).

The protein belongs to the glycosyltransferase 4 family. MraY subfamily. Mg(2+) serves as cofactor.

The protein localises to the cell inner membrane. The enzyme catalyses UDP-N-acetyl-alpha-D-muramoyl-L-alanyl-gamma-D-glutamyl-meso-2,6-diaminopimeloyl-D-alanyl-D-alanine + di-trans,octa-cis-undecaprenyl phosphate = di-trans,octa-cis-undecaprenyl diphospho-N-acetyl-alpha-D-muramoyl-L-alanyl-D-glutamyl-meso-2,6-diaminopimeloyl-D-alanyl-D-alanine + UMP. It functions in the pathway cell wall biogenesis; peptidoglycan biosynthesis. Its function is as follows. Catalyzes the initial step of the lipid cycle reactions in the biosynthesis of the cell wall peptidoglycan: transfers peptidoglycan precursor phospho-MurNAc-pentapeptide from UDP-MurNAc-pentapeptide onto the lipid carrier undecaprenyl phosphate, yielding undecaprenyl-pyrophosphoryl-MurNAc-pentapeptide, known as lipid I. The protein is Phospho-N-acetylmuramoyl-pentapeptide-transferase of Methylacidiphilum infernorum (isolate V4) (Methylokorus infernorum (strain V4)).